The sequence spans 152 residues: MISSFEVRKATIDDYFELRNLICDVTRCTETLSREQAEERFRYNTYHPYCLVDTENGRIVGYAGFYIIPHLGRKNDSRIEHVIISKEYRNRGLGRLLCKQIIEDAKNKFNCGRIDLTVESHIAKKLYSSLEFEKVNTEVMRNSFLDLTPKSD.

The N-acetyltransferase domain maps to 5–152 (FEVRKATIDD…SFLDLTPKSD (148 aa)). Catalysis depends on Y127, which acts as the Proton donor.

Belongs to the acetyltransferase family. Homotetramer.

The protein resides in the cytoplasm. It carries out the reaction an alkane-alpha,omega-diamine + acetyl-CoA = an N-acetylalkane-alpha,omega-diamine + CoA + H(+). It participates in amine and polyamine degradation; putrescine degradation; N-acetylputrescine from putrescine: step 1/1. Enzyme which catalyzes the acetylation of polyamines. Displays higher substrate specificity for spermine than for spermidine. May function to acetylate host-derived polyamines, thus alleviating the necessity for de novo synthesis of these molecules. The polypeptide is Diamine acetyltransferase (Cryptosporidium parvum (strain Iowa II)).